The chain runs to 156 residues: Small ribosomal subunit protein uS7 (156 aa).

The protein belongs to the universal ribosomal protein uS7 family. As to quaternary structure, part of the 30S ribosomal subunit. Contacts proteins S9 and S11.

One of the primary rRNA binding proteins, it binds directly to 16S rRNA where it nucleates assembly of the head domain of the 30S subunit. Is located at the subunit interface close to the decoding center, probably blocks exit of the E-site tRNA. In Polynucleobacter necessarius subsp. necessarius (strain STIR1), this protein is Small ribosomal subunit protein uS7.